Consider the following 291-residue polypeptide: Bifunctional protein FolD (291 aa).

Residues 166-168 (GAG), Ile-191, and Ile-232 each bind NADP(+).

Belongs to the tetrahydrofolate dehydrogenase/cyclohydrolase family. In terms of assembly, homodimer.

The catalysed reaction is (6R)-5,10-methylene-5,6,7,8-tetrahydrofolate + NADP(+) = (6R)-5,10-methenyltetrahydrofolate + NADPH. The enzyme catalyses (6R)-5,10-methenyltetrahydrofolate + H2O = (6R)-10-formyltetrahydrofolate + H(+). It participates in one-carbon metabolism; tetrahydrofolate interconversion. Catalyzes the oxidation of 5,10-methylenetetrahydrofolate to 5,10-methenyltetrahydrofolate and then the hydrolysis of 5,10-methenyltetrahydrofolate to 10-formyltetrahydrofolate. The sequence is that of Bifunctional protein FolD from Aquifex aeolicus (strain VF5).